Here is a 587-residue protein sequence, read N- to C-terminus: Deoxynucleoside triphosphate triphosphohydrolase sahd-1 (587 aa).

The HD domain occupies 92 to 262 (RFVHSLGTFS…GHDVDKMDYL (171 aa)). Positions 95, 134, 135, and 257 each coordinate Zn(2+). The disordered stretch occupies residues 554-587 (EKFLTPRKRSPQDSPDEVSSSCSTAKRRLEFGSS). Thr558 carries the phosphothreonine modification.

This sequence belongs to the SAMHD1 family. In terms of assembly, homodimer. Homotetramer; in dGTP-bound form. Zn(2+) serves as cofactor.

The protein localises to the nucleus. It is found in the chromosome. It carries out the reaction a 2'-deoxyribonucleoside 5'-triphosphate + H2O = a 2'-deoxyribonucleoside + triphosphate + H(+). Its activity is regulated as follows. Allosterically activated and regulated by GTP or dGTP. Allosteric activation promotes the formation of highly active homotetramers. Phosphorylation impairs homotetramerization, thereby inhibiting dNTPase activity. Its function is as follows. Has deoxynucleoside triphosphate (dNTPase) activity. dNTPase activity acts as a regulator of DNA precursor pools by regulating dNTP pools. Phosphorylation acts as a switch to control dNTPase-dependent and -independent functions. The chain is Deoxynucleoside triphosphate triphosphohydrolase sahd-1 from Caenorhabditis elegans.